Reading from the N-terminus, the 325-residue chain is Glutarate 2-hydroxylase (325 aa).

The Fe cation site is built by His-160, Asp-162, and His-292.

Belongs to the glutarate hydroxylase family. As to quaternary structure, homotetramer. Requires Fe(2+) as cofactor.

It carries out the reaction glutarate + 2-oxoglutarate + O2 = (S)-2-hydroxyglutarate + succinate + CO2. It functions in the pathway amino-acid degradation. Acts as an alpha-ketoglutarate-dependent dioxygenase catalyzing hydroxylation of glutarate (GA) to L-2-hydroxyglutarate (L2HG). Functions in a L-lysine degradation pathway that proceeds via cadaverine, glutarate and L-2-hydroxyglutarate. This Klebsiella pneumoniae (strain 342) protein is Glutarate 2-hydroxylase.